We begin with the raw amino-acid sequence, 367 residues long: DNA replication and repair protein RecF (367 aa).

ATP is bound at residue 30–37 (GANGSGKT).

It belongs to the RecF family.

It is found in the cytoplasm. In terms of biological role, the RecF protein is involved in DNA metabolism; it is required for DNA replication and normal SOS inducibility. RecF binds preferentially to single-stranded, linear DNA. It also seems to bind ATP. This Pseudomonas putida (strain GB-1) protein is DNA replication and repair protein RecF.